A 102-amino-acid polypeptide reads, in one-letter code: NADH-quinone oxidoreductase subunit K 1 (102 aa).

The next 3 helical transmembrane spans lie at 3–23 (TLTT…LGIL), 29–49 (VGML…FMAF), and 62–82 (IIAL…LSII).

It belongs to the complex I subunit 4L family. NDH-1 is composed of 14 different subunits. Subunits NuoA, H, J, K, L, M, N constitute the membrane sector of the complex.

The protein resides in the cell inner membrane. It carries out the reaction a quinone + NADH + 5 H(+)(in) = a quinol + NAD(+) + 4 H(+)(out). Its function is as follows. NDH-1 shuttles electrons from NADH, via FMN and iron-sulfur (Fe-S) centers, to quinones in the respiratory chain. The immediate electron acceptor for the enzyme in this species is believed to be ubiquinone. Couples the redox reaction to proton translocation (for every two electrons transferred, four hydrogen ions are translocated across the cytoplasmic membrane), and thus conserves the redox energy in a proton gradient. This is NADH-quinone oxidoreductase subunit K 1 from Syntrophobacter fumaroxidans (strain DSM 10017 / MPOB).